A 244-amino-acid chain; its full sequence is ATP synthase subunit a (244 aa).

The next 7 helical transmembrane spans lie at 17–37 (LSNV…AVLT), 74–94 (PFLA…MLGL), 112–132 (DPAI…YYGV), 148–168 (IPLL…TLGL), 171–191 (YGNI…ATNF), 196–216 (IALG…WQAF), and 217–237 (SLFV…VYIS).

It belongs to the ATPase A chain family. As to quaternary structure, F-type ATPases have 2 components, CF(1) - the catalytic core - and CF(0) - the membrane proton channel. CF(1) has five subunits: alpha(3), beta(3), gamma(1), delta(1), epsilon(1). CF(0) has three main subunits: a(1), b(2) and c(9-12). The alpha and beta chains form an alternating ring which encloses part of the gamma chain. CF(1) is attached to CF(0) by a central stalk formed by the gamma and epsilon chains, while a peripheral stalk is formed by the delta and b chains.

The protein resides in the cell membrane. Its function is as follows. Key component of the proton channel; it plays a direct role in the translocation of protons across the membrane. This chain is ATP synthase subunit a, found in Bacillus pumilus (strain SAFR-032).